Reading from the N-terminus, the 616-residue chain is Chaperone protein HscA homolog (616 aa).

This sequence belongs to the heat shock protein 70 family.

Its function is as follows. Probable chaperone. Has a low intrinsic ATPase activity which is markedly stimulated by HscB. The sequence is that of Chaperone protein HscA homolog from Vibrio cholerae serotype O1 (strain ATCC 39315 / El Tor Inaba N16961).